The chain runs to 204 residues: Pro-glucagon (204 aa).

The N-terminal stretch at 1 to 20 (MTSMYFVAGLLLMIVQGSWQ) is a signal peptide. Residues 84-109 (SGQQGVEEREKENLLDQLSSNGLARH) constitute a propeptide that is removed on maturation. An Arginine amide modification is found at Arg145. Propeptides lie at residues 149 to 161 (DFLE…DDIG) and 197 to 204 (RDLLGEYQ).

The protein belongs to the glucagon family. As to expression, isoform LPII is expressed in both pancreas and intestine. Expression of isoform LPI is restricted to the pancreas. Neither isoform is detected in salivary glands.

The protein resides in the secreted. Plays a key role in glucose metabolism and homeostasis. Regulates blood glucose by increasing gluconeogenesis and decreasing glycolysis. In terms of biological role, potent stimulator of glucose-dependent insulin release. Plays important roles on gastric motility and the suppression of plasma glucagon levels. Functionally, stimulates intestinal growth and up-regulates villus height in the small intestine, concomitant with increased crypt cell proliferation and decreased enterocyte apoptosis. The protein is Pro-glucagon (GCG) of Heloderma suspectum (Gila monster).